The sequence spans 695 residues: ATP-dependent DNA helicase II subunit 2 (695 aa).

The region spanning 229–461 is the Ku domain; it reads FSIGNRDSKD…IDFAVSNYID (233 aa).

The protein belongs to the ku80 family. Heterodimer of pku70 and pku80.

Its subcellular location is the nucleus. It localises to the chromosome. The protein localises to the telomere. It carries out the reaction ATP + H2O = ADP + phosphate + H(+). Functionally, single-stranded DNA-dependent ATP-dependent helicase. Involved in non-homologous end joining (NHEJ) DNA double strand break repair. DNA-binding is sequence-independent but has a high affinity to nicks in double-stranded DNA and to the ends of duplex DNA. Binds to naturally occurring chromosomal ends, and therefore provides chromosomal end protection. Required also for telomere recombination to repair telomeric ends in the absence of telomerase. ku70, of the ku70/ku80 heterodimer, binds to the stem loop of tlc1, the RNA component of telomerase. Involved in telomere maintenance. Interacts with telomeric repeats and subtelomeric sequences thereby controlling telomere length and protecting against subtelomeric rearrangement. Required for mating-type switching. The chain is ATP-dependent DNA helicase II subunit 2 (pku80) from Schizosaccharomyces pombe (strain 972 / ATCC 24843) (Fission yeast).